We begin with the raw amino-acid sequence, 103 residues long: Putative double-stranded DNA mimic protein HAPS_1002 (103 aa).

It belongs to the putative dsDNA mimic protein family.

In terms of biological role, may act as a double-stranded DNA (dsDNA) mimic. Probably regulates the activity of a dsDNA-binding protein. The polypeptide is Putative double-stranded DNA mimic protein HAPS_1002 (Glaesserella parasuis serovar 5 (strain SH0165) (Haemophilus parasuis)).